The sequence spans 146 residues: Large ribosomal subunit protein uL15 (146 aa).

The tract at residues 1 to 54 (MKLHELKPAAGSKKAPKRIGRGTGSGLGRNAGKGEKGQNARSGGGVRPGFEGGQ) is disordered. 2 stretches are compositionally biased toward gly residues: residues 21 to 31 (RGTGSGLGRNA) and 42 to 52 (SGGGVRPGFEG).

This sequence belongs to the universal ribosomal protein uL15 family. In terms of assembly, part of the 50S ribosomal subunit.

In terms of biological role, binds to the 23S rRNA. This chain is Large ribosomal subunit protein uL15, found in Clostridium beijerinckii (strain ATCC 51743 / NCIMB 8052) (Clostridium acetobutylicum).